Reading from the N-terminus, the 424-residue chain is Microcin H47 secretion protein MchE (424 aa).

Residues 1–25 are Cytoplasmic-facing; it reads MFRQDALENRKMKWQGRAILLPGIP. The helical transmembrane segment at 26 to 46 threads the bilayer; that stretch reads LWLIMLGSIVFITAFLMFIIV. Residues 47 to 424 lie on the Periplasmic side of the membrane; sequence GTYSRRVNVS…KHSATGPLND (378 aa).

The protein belongs to the membrane fusion protein (MFP) (TC 8.A.1) family.

It is found in the cell inner membrane. Functionally, probably involved, in conjunction with MchF, in the secretion of microcin H47. The protein is Microcin H47 secretion protein MchE (mchE) of Escherichia coli.